A 320-amino-acid chain; its full sequence is tRNA U34 carboxymethyltransferase (320 aa).

Residues Lys-87, Trp-101, Lys-106, Gly-126, 148–150, 176–177, Met-192, Tyr-196, and Arg-311 each bind carboxy-S-adenosyl-L-methionine; these read EPS and VE.

The protein belongs to the class I-like SAM-binding methyltransferase superfamily. CmoB family. As to quaternary structure, homotetramer.

It carries out the reaction carboxy-S-adenosyl-L-methionine + 5-hydroxyuridine(34) in tRNA = 5-carboxymethoxyuridine(34) in tRNA + S-adenosyl-L-homocysteine + H(+). Its function is as follows. Catalyzes carboxymethyl transfer from carboxy-S-adenosyl-L-methionine (Cx-SAM) to 5-hydroxyuridine (ho5U) to form 5-carboxymethoxyuridine (cmo5U) at position 34 in tRNAs. This Desulfotalea psychrophila (strain LSv54 / DSM 12343) protein is tRNA U34 carboxymethyltransferase.